The sequence spans 229 residues: MAKQPKRIQAWTGDREAAHAVAEAIALVKANAKAKFDESIEISVNLGVDPRHADQQVRGVVNLPSGTGRDVRVAVFAKDAKAAEATAAGAEHVGAEDLYEKIVGGFMDFDRVIATPDMMALVGRLGKVLGPRGLMPNPKVGTVTPNVGQAVKDAKGGAVEFRVEKAGIVHAGIGKVSFTDEALLINVKAMVDALVKAKPAGAKGIYVKRIGLSSTMGPGFKIDIASVNA.

This sequence belongs to the universal ribosomal protein uL1 family. As to quaternary structure, part of the 50S ribosomal subunit.

Its function is as follows. Binds directly to 23S rRNA. The L1 stalk is quite mobile in the ribosome, and is involved in E site tRNA release. Functionally, protein L1 is also a translational repressor protein, it controls the translation of the L11 operon by binding to its mRNA. In Caulobacter sp. (strain K31), this protein is Large ribosomal subunit protein uL1.